A 452-amino-acid chain; its full sequence is uncharacterized protein (452 aa).

The protein localises to the cytoplasm. The protein resides in the nucleus. This is an uncharacterized protein from Schizosaccharomyces pombe (strain 972 / ATCC 24843) (Fission yeast).